A 705-amino-acid chain; its full sequence is Variediene synthase (705 aa).

Residues 9–331 (LNSTLSSVVE…RCPRYHPWLC (323 aa)) are terpene cyclase. Residue aspartate 100 participates in Mg(2+) binding. Substrate-binding positions include aspartate 100, 186–189 (RIID), asparagine 230, 234–238 (SFDIE), and 325–326 (RY). A DDXXD 1 motif is present at residues 100–104 (DNVVE). An NSE/DTE motif is present at residues 230–238 (NDYFSFDIE). Residues 332–705 (KEAASLLHQD…VRLLIHRLKV (374 aa)) form a prenyltransferase region. The span at 349 to 366 (GRKPQALEEYRSRSHSES) shows a compositional bias: basic and acidic residues. Positions 349 to 374 (GRKPQALEEYRSRSHSESDLSDASPT) are disordered. Positions 424, 427, and 456 each coordinate isopentenyl diphosphate. Mg(2+)-binding residues include aspartate 463 and aspartate 467. The short motif at 463–467 (DDIED) is the DDXXD 2 element. Position 472 (arginine 472) interacts with dimethylallyl diphosphate. Arginine 473 contacts isopentenyl diphosphate. Dimethylallyl diphosphate-binding residues include lysine 550, threonine 551, glutamine 589, asparagine 596, lysine 605, and lysine 615.

This sequence in the N-terminal section; belongs to the terpene synthase family. In the C-terminal section; belongs to the FPP/GGPP synthase family. As to quaternary structure, hexamer. Mg(2+) serves as cofactor.

The enzyme catalyses isopentenyl diphosphate + (2E,6E)-farnesyl diphosphate = (2E,6E,10E)-geranylgeranyl diphosphate + diphosphate. It catalyses the reaction isopentenyl diphosphate + (2E,6E,10E)-geranylgeranyl diphosphate = (2E,6E,10E,14E)-geranylfarnesyl diphosphate + diphosphate. The catalysed reaction is (2E,6E,10E)-geranylgeranyl diphosphate = variediene + diphosphate. It carries out the reaction (2E,6E,10E,14E)-geranylfarnesyl diphosphate = (R,2E)-alpha-cericerene + diphosphate. Its pathway is secondary metabolite biosynthesis; terpenoid biosynthesis. In terms of biological role, bifunctional terpene synthase that converts dimethylallyl diphosphate (DMAPP) and isopentenyl diphosphate (IPP) into variediene as a single product. The C-terminal prenyltransferase (PT) domain of EvVS catalyzes formation of geranylgeranyl pyrophosphate (GGPP), whereas the N-terminal terpene cyclase (TC) domain catalyzes the cyclization of GGPP to variediene. The PT domain can also synthesize geranylfarnesyl pyrophosphate (GFPP) from the C5 isoprene units in vitro, while the TC domain is able to cyclize GFPP to the sesterterpene (2E)-alpha-cericerene. The chain is Variediene synthase from Emericella variicolor (Aspergillus stellatus).